Reading from the N-terminus, the 240-residue chain is Small ribosomal subunit protein uS3 (240 aa).

In terms of domain architecture, KH type-2 spans 39–107; the sequence is IRDFIKKEAK…ELHLNIVEVR (69 aa). Composition is skewed to basic and acidic residues over residues 212–221 and 231–240; these read PQARDRRATE and PRRDRDRDAR. The segment at 212-240 is disordered; the sequence is PQARDRRATEAQDGPSPRGPRRDRDRDAR.

This sequence belongs to the universal ribosomal protein uS3 family. Part of the 30S ribosomal subunit. Forms a tight complex with proteins S10 and S14.

In terms of biological role, binds the lower part of the 30S subunit head. Binds mRNA in the 70S ribosome, positioning it for translation. The chain is Small ribosomal subunit protein uS3 from Paracoccus denitrificans (strain Pd 1222).